Reading from the N-terminus, the 80-residue chain is Conotoxin Pu11.1 (80 aa).

Positions 1–19 (MKLVLAIVLILMLLSLSTG) are cleaved as a signal peptide. A propeptide spanning residues 20–42 (AEMSDNHASRSATALTDRLLGPK) is cleaved from the precursor. 4 disulfides stabilise this stretch: Cys46/Cys60, Cys53/Cys65, Cys59/Cys72, and Cys64/Cys79.

This sequence belongs to the conotoxin I3 superfamily. As to expression, expressed by the venom duct.

It localises to the secreted. This chain is Conotoxin Pu11.1, found in Conus pulicarius (Flea-bitten cone).